Reading from the N-terminus, the 178-residue chain is Vegetative protein (178 aa).

Disordered regions lie at residues 67–102 (AGRR…AAAG) and 138–158 (NRRP…DIKL). Positions 76-90 (PAARSAVTAAPAAVG) are enriched in low complexity.

In Myxococcus xanthus, this protein is Vegetative protein (vegA).